The following is a 176-amino-acid chain: RING-H2 finger protein ATL14 (176 aa).

Residues 1-26 (MSITIPYDGSISREPSPSPPPPKANT) form a disordered region. A helical membrane pass occupies residues 37–57 (FLIGLIMIPVAITAFIFILTS). An RING-type; atypical zinc finger spans residues 115 to 157 (CVVCIDGFRQGQWCRKLPRCGHVFHRKCVDLWLIKVSTCPICR).

Belongs to the RING-type zinc finger family. ATL subfamily.

It is found in the membrane. The enzyme catalyses S-ubiquitinyl-[E2 ubiquitin-conjugating enzyme]-L-cysteine + [acceptor protein]-L-lysine = [E2 ubiquitin-conjugating enzyme]-L-cysteine + N(6)-ubiquitinyl-[acceptor protein]-L-lysine.. The protein operates within protein modification; protein ubiquitination. The chain is RING-H2 finger protein ATL14 (ATL14) from Arabidopsis thaliana (Mouse-ear cress).